A 235-amino-acid chain; its full sequence is Secreted RxLR effector protein 27 (235 aa).

The signal sequence occupies residues 1 to 25; it reads MTNLFTRHTRRSLTALALLSGGVYA. The short motif at 36 to 60 is the RxLR-dEER element; the sequence is RSLRVFVTGGQVLWDYRIHFKGIER.

It belongs to the RxLR effector family.

It localises to the secreted. It is found in the host cytoplasm. The protein localises to the host nucleus. In terms of biological role, effector that acts as a broad suppressor of cell death to interrupt plant immunity. Inhibits cell death induced by cell death-inducing proteins, including the PAMP elicitor INF1 from P.infestans. The polypeptide is Secreted RxLR effector protein 27 (Plasmopara viticola (Downy mildew of grapevine)).